A 211-amino-acid polypeptide reads, in one-letter code: Uracil phosphoribosyltransferase (211 aa).

5-phospho-alpha-D-ribose 1-diphosphate-binding positions include arginine 77, arginine 102, and 129–137; that span reads DPMLATGGS. Uracil contacts are provided by residues isoleucine 192 and 197-199; that span reads GDA. Aspartate 198 lines the 5-phospho-alpha-D-ribose 1-diphosphate pocket.

This sequence belongs to the UPRTase family. Mg(2+) is required as a cofactor.

It carries out the reaction UMP + diphosphate = 5-phospho-alpha-D-ribose 1-diphosphate + uracil. It participates in pyrimidine metabolism; UMP biosynthesis via salvage pathway; UMP from uracil: step 1/1. With respect to regulation, allosterically activated by GTP. Catalyzes the conversion of uracil and 5-phospho-alpha-D-ribose 1-diphosphate (PRPP) to UMP and diphosphate. This Corynebacterium efficiens (strain DSM 44549 / YS-314 / AJ 12310 / JCM 11189 / NBRC 100395) protein is Uracil phosphoribosyltransferase.